The sequence spans 158 residues: Endoribonuclease YbeY (158 aa).

Positions 119, 123, and 129 each coordinate Zn(2+).

This sequence belongs to the endoribonuclease YbeY family. The cofactor is Zn(2+).

The protein resides in the cytoplasm. Its function is as follows. Single strand-specific metallo-endoribonuclease involved in late-stage 70S ribosome quality control and in maturation of the 3' terminus of the 16S rRNA. The sequence is that of Endoribonuclease YbeY from Shewanella woodyi (strain ATCC 51908 / MS32).